The sequence spans 93 residues: Phosphoribosyl-ATP pyrophosphatase (93 aa).

The protein belongs to the PRA-PH family.

Its subcellular location is the cytoplasm. It catalyses the reaction 1-(5-phospho-beta-D-ribosyl)-ATP + H2O = 1-(5-phospho-beta-D-ribosyl)-5'-AMP + diphosphate + H(+). Its pathway is amino-acid biosynthesis; L-histidine biosynthesis; L-histidine from 5-phospho-alpha-D-ribose 1-diphosphate: step 2/9. This Mycolicibacterium smegmatis (strain ATCC 700084 / mc(2)155) (Mycobacterium smegmatis) protein is Phosphoribosyl-ATP pyrophosphatase.